A 150-amino-acid polypeptide reads, in one-letter code: Cytochrome c oxidase subunit 5A, mitochondrial (150 aa).

The transit peptide at 1–41 (MLGAALRRCAVAATTWAGPRGLLHSARTPGPAAAIQSVRCY) directs the protein to the mitochondrion. Residues 2-17 (LGAALRRCAVAATTWA) carry the SIFI-degron motif. 2 positions are modified to N6-acetyllysine: Lys-87 and Lys-113. Thr-141 is subject to Phosphothreonine.

Belongs to the cytochrome c oxidase subunit 5A family. In terms of assembly, component of the cytochrome c oxidase (complex IV, CIV), a multisubunit enzyme composed of 14 subunits. The complex is composed of a catalytic core of 3 subunits MT-CO1, MT-CO2 and MT-CO3, encoded in the mitochondrial DNA, and 11 supernumerary subunits COX4I, COX5A, COX5B, COX6A, COX6B, COX6C, COX7A, COX7B, COX7C, COX8 and NDUFA4, which are encoded in the nuclear genome. The complex exists as a monomer or a dimer and forms supercomplexes (SCs) in the inner mitochondrial membrane with NADH-ubiquinone oxidoreductase (complex I, CI) and ubiquinol-cytochrome c oxidoreductase (cytochrome b-c1 complex, complex III, CIII), resulting in different assemblies (supercomplex SCI(1)III(2)IV(1) and megacomplex MCI(2)III(2)IV(2)). Interacts with AFG1L. Interacts with RAB5IF. In response to mitochondrial stress, the precursor protein is ubiquitinated by the SIFI complex in the cytoplasm before mitochondrial import, leading to its degradation. Within the SIFI complex, UBR4 initiates ubiquitin chain that are further elongated or branched by KCMF1.

The protein resides in the mitochondrion inner membrane. It functions in the pathway energy metabolism; oxidative phosphorylation. Functionally, component of the cytochrome c oxidase, the last enzyme in the mitochondrial electron transport chain which drives oxidative phosphorylation. The respiratory chain contains 3 multisubunit complexes succinate dehydrogenase (complex II, CII), ubiquinol-cytochrome c oxidoreductase (cytochrome b-c1 complex, complex III, CIII) and cytochrome c oxidase (complex IV, CIV), that cooperate to transfer electrons derived from NADH and succinate to molecular oxygen, creating an electrochemical gradient over the inner membrane that drives transmembrane transport and the ATP synthase. Cytochrome c oxidase is the component of the respiratory chain that catalyzes the reduction of oxygen to water. Electrons originating from reduced cytochrome c in the intermembrane space (IMS) are transferred via the dinuclear copper A center (CU(A)) of subunit 2 and heme A of subunit 1 to the active site in subunit 1, a binuclear center (BNC) formed by heme A3 and copper B (CU(B)). The BNC reduces molecular oxygen to 2 water molecules using 4 electrons from cytochrome c in the IMS and 4 protons from the mitochondrial matrix. This is Cytochrome c oxidase subunit 5A, mitochondrial (COX5A) from Papio anubis (Olive baboon).